The sequence spans 92 residues: Conotoxin Cal22f (92 aa).

The N-terminal stretch at 1–24 (MMSTKGITLFLCLLLLALATSVNG) is a signal peptide. Residues 25 to 44 (GQGTRRSRMTRALHGGRPSA) constitute a propeptide that is removed on maturation.

In terms of processing, contains 4 disulfide bonds. Expressed by the venom duct.

The protein resides in the secreted. Probable neurotoxin with unknown target. Possibly targets ion channels. The protein is Conotoxin Cal22f of Californiconus californicus (California cone).